Reading from the N-terminus, the 237-residue chain is Neurogenin-1 (237 aa).

The disordered stretch occupies residues Leu35 to Glu83. Over residues Ala38–Pro53 the composition is skewed to low complexity. The 53-residue stretch at Ser92–Leu144 folds into the bHLH domain. Residues Gly175–Thr209 are disordered. The segment covering Ala180–Asp207 has biased composition (low complexity).

As to quaternary structure, efficient DNA binding requires dimerization with another bHLH protein. In terms of tissue distribution, expression restricted to the embryonic nervous system.

It localises to the nucleus. Acts as a transcriptional regulator. Involved in the initiation of neuronal differentiation. Activates transcription by binding to the E box (5'-CANNTG-3'). Associates with chromatin to enhancer regulatory elements in genes encoding key transcriptional regulators of neurogenesis. The polypeptide is Neurogenin-1 (NEUROG1) (Homo sapiens (Human)).